The chain runs to 150 residues: UPF0756 membrane protein APL_0366 (150 aa).

4 consecutive transmembrane segments (helical) span residues 12–34, 52–72, 82–102, and 123–143; these read LVVLIFLGVVGNNNSITIAATVL, HGLSIGIIILTIGVLSPIVSG, FLNWKMLLAVVAGIAVAWLGG, and IIGVALLGGVPVGPLIAAGIL.

Belongs to the UPF0756 family.

It is found in the cell membrane. The protein is UPF0756 membrane protein APL_0366 of Actinobacillus pleuropneumoniae serotype 5b (strain L20).